A 387-amino-acid polypeptide reads, in one-letter code: Succinate--CoA ligase [ADP-forming] subunit beta (387 aa).

In terms of domain architecture, ATP-grasp spans K9–E244. ATP contacts are provided by residues K46, G53–G55, E99, L102, and E107. 2 residues coordinate Mg(2+): N199 and D213. Substrate-binding positions include N264 and G321 to M323.

It belongs to the succinate/malate CoA ligase beta subunit family. In terms of assembly, heterotetramer of two alpha and two beta subunits. It depends on Mg(2+) as a cofactor.

It catalyses the reaction succinate + ATP + CoA = succinyl-CoA + ADP + phosphate. It carries out the reaction GTP + succinate + CoA = succinyl-CoA + GDP + phosphate. The protein operates within carbohydrate metabolism; tricarboxylic acid cycle; succinate from succinyl-CoA (ligase route): step 1/1. Functionally, succinyl-CoA synthetase functions in the citric acid cycle (TCA), coupling the hydrolysis of succinyl-CoA to the synthesis of either ATP or GTP and thus represents the only step of substrate-level phosphorylation in the TCA. The beta subunit provides nucleotide specificity of the enzyme and binds the substrate succinate, while the binding sites for coenzyme A and phosphate are found in the alpha subunit. The chain is Succinate--CoA ligase [ADP-forming] subunit beta from Methylobacillus flagellatus (strain ATCC 51484 / DSM 6875 / VKM B-1610 / KT).